The following is a 103-amino-acid chain: Alkanal monooxygenase alpha chain (103 aa).

As to quaternary structure, heterodimer of an alpha and a beta chain.

The enzyme catalyses a long-chain fatty aldehyde + FMNH2 + O2 = a long-chain fatty acid + hnu + FMN + H2O + 2 H(+). Functionally, light-emitting reaction in luminous bacteria. The protein is Alkanal monooxygenase alpha chain (luxA) of Vibrio cholerae.